Reading from the N-terminus, the 540-residue chain is MNHSTSDQSLYIESDDGDDERKHLSDDEDDDGTLSDTSDAYNQNQHHLSKASPYSTAWPKSYRQSIDMFGSVPSPNLGFLANSSMSRRGSSFMSSTLTRRHTPESLPCVTKPLLEDEEAPKHKLSTHSLLPSKPSSSMVVSHDMGISNDSSFGQAVLNGVNVLCGVGILSTPYAVKEGGWLGLIILFAFGILCFYTGLLLRYCLDSHPDVQTYPDIGHAAFGSTGRILVSVILYMELYAMSVEYIILEGDNLSSMFPNASLSIGGFHLDAPRLFALLTTLAVLPTVWLRDLSVLSYISAGGVIASVLVVLCLFWVGLVDDVGIHSKGTPLNLATLPVSVGLYGYCYSGHGVFPNIYTSMAKPSQFSAVLLASFGICTLMYAGVAVMGYSMFGESTESQFTLNLPQDLVASKIALWTTVVNPFTKYALTLSPVAMSLEELIPSNYGKSRFYAIAIRSALAISTLLVGLAIPFFGLVMSLIGSFLTMLITLILPPACFLSILRKKVTPTQVTICILIMTVGAVCSVIGTYSALAKIIEKLNT.

Residues 1–11 are compositionally biased toward polar residues; sequence MNHSTSDQSLY. Positions 1 to 55 are disordered; that stretch reads MNHSTSDQSLYIESDDGDDERKHLSDDEDDDGTLSDTSDAYNQNQHHLSKASPYS. The next 11 helical transmembrane spans lie at 155-175, 180-200, 227-247, 273-293, 297-317, 332-352, 367-387, 412-432, 452-474, 478-500, and 511-531; these read AVLNGVNVLCGVGILSTPYAV, WLGLIILFAFGILCFYTGLLL, ILVSVILYMELYAMSVEYIIL, LFALLTTLAVLPTVWLRDLSV, ISAGGVIASVLVVLCLFWVGL, LATLPVSVGLYGYCYSGHGVF, AVLLASFGICTLMYAGVAVMG, IALWTTVVNPFTKYALTLSPV, IAIRSALAISTLLVGLAIPFFGL, LIGSFLTMLITLILPPACFLSIL, and ICILIMTVGAVCSVIGTYSAL.

It belongs to the amino acid/polyamine transporter 2 family. Amino acid/auxin permease (AAAP) (TC 2.A.18.5) subfamily.

The protein resides in the membrane. The sequence is that of Amino acid transporter AVT1B from Arabidopsis thaliana (Mouse-ear cress).